The chain runs to 445 residues: 3-phosphoshikimate 1-carboxyvinyltransferase (445 aa).

Residues 1–25 form a disordered region; it reads MSGHGPAQPMTARRSGPLKGRAEIP. 3-phosphoshikimate contacts are provided by Lys-28, Ser-29, and Arg-33. Lys-28 is a binding site for phosphoenolpyruvate. Positions 101 and 129 each coordinate phosphoenolpyruvate. Ser-174, Gln-176, Asp-326, and Lys-353 together coordinate 3-phosphoshikimate. A phosphoenolpyruvate-binding site is contributed by Gln-176. Residue Asp-326 is the Proton acceptor of the active site. 2 residues coordinate phosphoenolpyruvate: Arg-357 and Arg-400.

This sequence belongs to the EPSP synthase family. Monomer.

Its subcellular location is the cytoplasm. The enzyme catalyses 3-phosphoshikimate + phosphoenolpyruvate = 5-O-(1-carboxyvinyl)-3-phosphoshikimate + phosphate. The protein operates within metabolic intermediate biosynthesis; chorismate biosynthesis; chorismate from D-erythrose 4-phosphate and phosphoenolpyruvate: step 6/7. Its function is as follows. Catalyzes the transfer of the enolpyruvyl moiety of phosphoenolpyruvate (PEP) to the 5-hydroxyl of shikimate-3-phosphate (S3P) to produce enolpyruvyl shikimate-3-phosphate and inorganic phosphate. This is 3-phosphoshikimate 1-carboxyvinyltransferase from Cereibacter sphaeroides (strain ATCC 17029 / ATH 2.4.9) (Rhodobacter sphaeroides).